Consider the following 1032-residue polypeptide: Importin beta-like protein KAP120 (1032 aa).

Residue A2 is modified to N-acetylalanine. The 73-residue stretch at 31–103 (AEQQLRQWET…RGRLFEMIDE (73 aa)) folds into the Importin N-terminal domain.

The protein belongs to the importin beta family. Interacts with GTP-bound GSP1 and RFP1. Associates with the nuclear pore complex.

The protein resides in the cytoplasm. The protein localises to the nucleus. In terms of biological role, functions in nuclear protein import as nuclear transport receptor. Serves as receptor for nuclear localization signals (NLS) in cargo substrates. Thought to mediate docking of the importin/substrate complex to the nuclear pore complex (NPC) through binding to nucleoporin and the complex is subsequently translocated through the pore by an energy requiring, RAN-dependent mechanism. Required for nuclear import of Ho endonuclease and RFP1, and involved in rRNA-processing and assembly or export of 60S ribosomal subunits. This Saccharomyces cerevisiae (strain ATCC 204508 / S288c) (Baker's yeast) protein is Importin beta-like protein KAP120 (KAP120).